We begin with the raw amino-acid sequence, 233 residues long: Purine nucleoside phosphorylase DeoD-type (233 aa).

Histidine 4 serves as a coordination point for a purine D-ribonucleoside. Phosphate-binding positions include glycine 20, arginine 24, arginine 43, and 87–90 (RVGT). A purine D-ribonucleoside contacts are provided by residues glutamate 162, 179-181 (EME), and 203-204 (SD). Catalysis depends on aspartate 204, which acts as the Proton donor.

Belongs to the PNP/UDP phosphorylase family. As to quaternary structure, homohexamer; trimer of homodimers.

It catalyses the reaction a purine D-ribonucleoside + phosphate = a purine nucleobase + alpha-D-ribose 1-phosphate. It carries out the reaction a purine 2'-deoxy-D-ribonucleoside + phosphate = a purine nucleobase + 2-deoxy-alpha-D-ribose 1-phosphate. In terms of biological role, catalyzes the reversible phosphorolytic breakdown of the N-glycosidic bond in the beta-(deoxy)ribonucleoside molecules, with the formation of the corresponding free purine bases and pentose-1-phosphate. The chain is Purine nucleoside phosphorylase DeoD-type from Alkaliphilus metalliredigens (strain QYMF).